Consider the following 455-residue polypeptide: Post-transcriptional regulator MTA (455 aa).

Residues 17-163 (DSVSSSEFDE…QVNCQRQDDD (147 aa)) form a disordered region. Acidic residues predominate over residues 23–42 (EFDESRDDETDAPTLEDEQL). Low complexity predominate over residues 88 to 98 (SPLSRPRSPSP). 3 consecutive short sequence motifs (nuclear localization signal) follow at residues 101–107 (RYGKKIK), 121–130 (KRPRRRPRDR), and 143–152 (RAAPKRATRR). Zn(2+) contacts are provided by Cys-333, His-423, Cys-427, and Cys-432. The CHC2-type zinc-finger motif lies at 333–432 (CVFDKQSELA…HHSLCRNSEC (100 aa)).

The protein belongs to the HHV-1 ICP27 protein family. As to quaternary structure, homodimer. Homodimerization is required for transactivation. Interacts with host ALYREF. Associates in a complex with RNA, and host export factors NXF1/TAP and ALYREF; these interactions allow nuclear export of viral transcripts. Interacts with protein K-bZIP/K8; this interaction promotes viral gene expression during lytic infection. Interacts with host PABPC1. Interacts with host AGO2 and TNRC6A; these interactions inhibit host P-body formation. Interacts with PRKRA and EIF2AK2/PKR; these interactions inhibit host stress granule formation. In terms of processing, proteolytically cleaved by host caspase-7 (CASP7), leading to its inactivation, thereby preventing expression of viral lytic genes.

It is found in the host cytoplasm. The protein localises to the host nucleus. Its function is as follows. Post-transcriptional regulator that plays an essential role in the expression of viral lytic genes and productive viral replication. Possesses numerous activities that promote the expression of viral genes including enhancement of RNA stability, promotion of RNA splicing and stimulation of protein translation often via its ability to interact with different cellular cofactors. Stabilizes polyadenylated nuclear (PAN) RNA by cooperative binding to a 9-nt core of the MRE (MTA responsive element) together with host PABPC1. Functions as a viral splicing factor and promotes expression of intron-containing viral lytic genes. Protects viral transcripts from specific nuclear RNA decay pathways by preventing host MTREX recruitment that promotes unwinding and degradation of structured RNA substrates. Plays a role in the inhibition of host P-body formation by altering the scaffolding activity of TNRC6A at the initial stage thereby enhancing virus production. Also inhibits host stress granule formation by blocking autophosphorylation of EIF2AK2/PKR and its subsequent binding to dsRNA. In Human herpesvirus 8 type P (isolate GK18) (HHV-8), this protein is Post-transcriptional regulator MTA.